Here is a 575-residue protein sequence, read N- to C-terminus: G2/mitotic-specific cyclin-B3 (575 aa).

Residues 75-83 carry the D-box motif; sequence RSALGNLTN. Position 215 is a phosphoserine (S215).

This sequence belongs to the cyclin family. Cyclin AB subfamily. Interacts with Cdk1 kinase. Ubiquitinated. Ubiquitination leads to its degradation in early anaphase. In embryo, it is expressed in all mitotically proliferating cells, with a high level in neuroblasts. Not expressed in old embryos and thereafter. Not expressed in endoreplicating tissues.

The protein localises to the nucleus. Its function is as follows. Cyclins are positive regulatory subunits of the cyclin-dependent kinases (CDKs), and thereby play an essential role in the control of the cell cycle, notably via their destruction during cell division. Probably functions redundantly with other cyclins in regulation of cell cycle. Its presence may be required to delay a deadline for completing cytokinesis that is ordinary imposed by nuclear envelope reformation. Degradation of CycB and CycB3 promote cytokinesis furrow initiation and ingression. Required with CycB for female fertility. This Drosophila melanogaster (Fruit fly) protein is G2/mitotic-specific cyclin-B3 (CycB3).